The following is a 115-amino-acid chain: uncharacterized protein (115 aa).

The next 2 membrane-spanning stretches (helical) occupy residues 11-31 (FLYL…LVWN) and 85-105 (GYII…YALI).

This sequence to M.thermoautotrophicum MTH1706.

Its subcellular location is the cell membrane. This is an uncharacterized protein from Methanocaldococcus jannaschii (strain ATCC 43067 / DSM 2661 / JAL-1 / JCM 10045 / NBRC 100440) (Methanococcus jannaschii).